We begin with the raw amino-acid sequence, 359 residues long: MAPNITSAPTGVLFEGDTIGPAAKDQQAEVNAPEAKKPREPYRRQIVWRNVILFIYLHLAALYGAYLAFTSAKIATTIFAIILYQVSGVGITGGAHRLWAHRSYKAKWPLRVILMLCNTLAFQNHIYEWARDHRVHHKFSETDADPHNATRGFFFSHVGWLLVRKHPDVKEKGKGIDMHDLEQDKIVMFQKKYYLILMPIVCFLIPTTIPVYMWNETWSNAWFVATLFRYTFTLNMTWLVNSAAHMWGSQPYDKYINPAENLGVALGAMGEGWHNYHHVFPWDYKAAELGNYRANFTTAFIDFFARIGWAYDLKTVPVSMIQRRVERTGDGSHEVWGWGDKDMPQEDIDGAVIEKRKTQ.

Transmembrane regions (helical) follow at residues 51-71 (VILFIYLHLAALYGAYLAFTS) and 74-94 (IATTIFAIILYQVSGVGITGG). 5 residues coordinate Fe cation: His96, His101, His133, His136, and His137. The Histidine box-1 motif lies at 96-101 (HRLWAH). The Histidine box-2 motif lies at 133–137 (HRVHH). Transmembrane regions (helical) follow at residues 194–214 (YLILMPIVCFLIPTTIPVYMW) and 222–244 (WFVATLFRYTFTLNMTWLVNSAA). 4 residues coordinate Fe cation: His245, His274, His277, and His278. The Histidine box-3 signature appears at 274-278 (HNYHH).

Belongs to the fatty acid desaturase type 1 family. The cofactor is Fe(2+).

It localises to the membrane. The catalysed reaction is octadecanoyl-CoA + 2 Fe(II)-[cytochrome b5] + O2 + 2 H(+) = (9Z)-octadecenoyl-CoA + 2 Fe(III)-[cytochrome b5] + 2 H2O. It catalyses the reaction hexadecanoyl-CoA + 2 Fe(II)-[cytochrome b5] + O2 + 2 H(+) = (9Z)-hexadecenoyl-CoA + 2 Fe(III)-[cytochrome b5] + 2 H2O. Functionally, catalyzes the formation of a Delta9 double bond, acting on saturated fatty acyl substrates like palmitoyl-CoA (hexadecanoyl-CoA) and stearoyl-CoA (octadecanoyl-CoA) with higher desaturation activity on octadecanoyl-CoA than hexadecanoyl-CoA. In Acheta domesticus (House cricket), this protein is Acyl-CoA Delta-9 desaturase.